Reading from the N-terminus, the 183-residue chain is Inner membrane protein p54 (183 aa).

Residues 32 to 52 (YTILIAIVVLVIIIIVLIYLF) traverse the membrane as a helical segment. Residues 81 to 157 (EVTPQPGTSK…PYTTVTTQNT (77 aa)) are disordered. A compositionally biased stretch (polar residues) spans 111-122 (RPATNKPVTDNP). Positions 130 to 143 (ATGGPAAAPAAASA) are enriched in low complexity. Residues 149 to 161 (YTTVTTQNTASQT) are interaction with host DYNLL1.

This sequence belongs to the asfivirus envelope protein p54 family. In terms of assembly, interacts with the host light chain cytoplasmic dynein DYNLL1; this interaction is critical for intracellular microtubule-dependent virus transport toward viral factories.

The protein resides in the virion membrane. It is found in the host cytoplasm. It localises to the host cytoskeleton. The protein localises to the host endoplasmic reticulum membrane. Its function is as follows. Inner envelope protein involved, through its interaction with host dynein, in the intracellular microtubule-dependent transport of viral capsid toward viral factories. Seems to induce caspase-3 activation and apoptosis. Plays a role in virion morphogenesis by recruiting and transforming the host ER membranes into the precursors of the viral envelope. Involved in virus attachment to the host cell. This chain is Inner membrane protein p54, found in African swine fever virus (strain Badajoz 1971 Vero-adapted) (Ba71V).